Here is a 691-residue protein sequence, read N- to C-terminus: POU domain, class 6, transcription factor 2 (691 aa).

The span at 25–36 (MNAELRGEDKAA) shows a compositional bias: basic and acidic residues. 3 disordered regions span residues 25–93 (MNAE…PVGP), 186–297 (LQQQ…LQLV), and 435–461 (SQAS…SALS). Positions 186 to 195 (LQQQQQQQQQ) are enriched in low complexity. A compositionally biased stretch (pro residues) spans 196 to 210 (QPPPSTNQHPQPAPQ). Residues 211-220 (APSQSQQQPL) show a composition bias toward low complexity. Residues 221 to 238 (QPTPPQQPPPASQQPPAP) show a composition bias toward pro residues. Low complexity-rich tracts occupy residues 239–280 (TSQL…SQSP) and 438–461 (SMSQ…SALS). In terms of domain architecture, POU-specific spans 476-586 (VDGVNLEEIR…VLERWMAEAE (111 aa)). The segment at residues 607–666 (KRKRRTSFTPQALEILNAHFEKNTHPSGQEMTEIAEKLNYDREVVRVWFCNKRQALKNTI) is a DNA-binding region (homeobox).

It belongs to the POU transcription factor family. Class-6 subfamily. As to expression, expressed only within the CNS, where its expression is restricted to the medical habenulla, to a dispersed population of neurons in the dorsal hypothalamus, and to subsets of ganglion and amacrine cells in the retina.

Its subcellular location is the nucleus. Its function is as follows. Probable transcription factor likely to be involved in early steps in the differentiation of amacrine and ganglion cells. Recognizes and binds to the DNA sequence 5'-ATGCAAAT-3'. Isoform 1 does not bind DNA. In Homo sapiens (Human), this protein is POU domain, class 6, transcription factor 2 (POU6F2).